Reading from the N-terminus, the 406-residue chain is Calsequestrin-1 (406 aa).

The N-terminal stretch at 1-34 (MRATDRMGARAVSKLRLALLFVLVLGTPRSGVQG) is a signal peptide. Tyr-43 is modified (phosphotyrosine). Ser-81 carries the post-translational modification Phosphoserine. Position 124 is a phosphothreonine (Thr-124). Ser-216 is modified (phosphoserine). A glycan (N-linked (GlcNAc...) asparagine) is linked at Asn-350. The disordered stretch occupies residues 382-406 (EGEINTEDDDDDDDDDDDDDDDDDD).

Belongs to the calsequestrin family. Monomer; increases in response to a depletion of intracellular calcium. Homodimer. Homotetramer and homopolymer. Can form linear homooligomers. Ca(2+) ions promote oligomerization. Interacts (via C-terminal end and preferentially with the monomeric form) with STIM1; this interaction increases in response to a depletion of intracellular calcium, decreases both STIM1 aggregation and clustering, interaction of STIM1 with ORAI1 and store-operated Ca(2+) entry (SOCE) activity. Interacts with ASPH and TRDN. In terms of processing, N-glycosylated. In terms of tissue distribution, detected in skeletal muscle and in smooth muscle from vas deferens, aorta and stomach (at protein level).

The protein localises to the endoplasmic reticulum. It localises to the sarcoplasmic reticulum. The protein resides in the sarcoplasmic reticulum lumen. Its subcellular location is the sarcoplasmic reticulum membrane. It is found in the mitochondrion matrix. Its function is as follows. Calsequestrin is a high-capacity, moderate affinity, calcium-binding protein and thus acts as an internal calcium store in muscle. Calcium ions are bound by clusters of acidic residues at the protein surface, often at the interface between subunits. Can bind around 80 Ca(2+) ions. Regulates the release of lumenal Ca(2+) via the calcium release channel RYR1; this plays an important role in triggering muscle contraction. Negatively regulates store-operated Ca(2+) entry (SOCE) activity. This Rattus norvegicus (Rat) protein is Calsequestrin-1 (Casq1).